Reading from the N-terminus, the 237-residue chain is Large ribosomal subunit protein uL1 (237 aa).

It belongs to the universal ribosomal protein uL1 family. As to quaternary structure, part of the 50S ribosomal subunit.

Binds directly to 23S rRNA. The L1 stalk is quite mobile in the ribosome, and is involved in E site tRNA release. Its function is as follows. Protein L1 is also a translational repressor protein, it controls the translation of the L11 operon by binding to its mRNA. The sequence is that of Large ribosomal subunit protein uL1 from Nocardia farcinica (strain IFM 10152).